The following is a 361-amino-acid chain: uncharacterized protein (361 aa).

Residues 1-17 form the signal peptide; it reads MNLFIYVLLLSIWTSSC. The Extracellular segment spans residues 18–47; it reads LDRNESNGSATAVTTHAEFKQTKLQELRRR. Asn-24 is a glycosylation site (N-linked (GlcNAc...) asparagine). A helical transmembrane segment spans residues 48-68; it reads LLIIVIGTLITGYMVSCTCLL. At 69–361 the chain is on the cytoplasmic side; it reads HYSCDSEEAH…EDIYKNSRNN (293 aa). Positions 95 to 106 are enriched in polar residues; the sequence is SSKISFTDSKSP. Positions 95 to 197 are disordered; sequence SSKISFTDSK…SQVSPSYPEK (103 aa). The span at 144–158 shows a compositional bias: low complexity; the sequence is PSSQKKPSKPSAPKK. Residues 169-185 are compositionally biased toward basic residues; it reads HRTRSPKKAHRQAHAHK.

The protein localises to the membrane. This is an uncharacterized protein from Bos taurus (Bovine).